The chain runs to 402 residues: Protein arginine methyltransferase NDUFAF7 homolog, mitochondrial (402 aa).

The protein belongs to the NDUFAF7 family.

It is found in the mitochondrion. The enzyme catalyses L-arginyl-[protein] + 2 S-adenosyl-L-methionine = N(omega),N(omega)'-dimethyl-L-arginyl-[protein] + 2 S-adenosyl-L-homocysteine + 2 H(+). Arginine methyltransferase involved in the assembly or stability of mitochondrial NADH:ubiquinone oxidoreductase complex (complex I). In Saccharomyces cerevisiae (strain ATCC 204508 / S288c) (Baker's yeast), this protein is Protein arginine methyltransferase NDUFAF7 homolog, mitochondrial.